Here is a 184-residue protein sequence, read N- to C-terminus: Photosystem I assembly protein Ycf4 (184 aa).

A run of 2 helical transmembrane segments spans residues 19-39 (ISNLCWAFILFLGSLGFFLVG) and 57-77 (IIFFPQGIVMSFYGIAGLFIS).

The protein belongs to the Ycf4 family.

The protein resides in the plastid thylakoid membrane. In terms of biological role, seems to be required for the assembly of the photosystem I complex. The chain is Photosystem I assembly protein Ycf4 from Cuscuta exaltata (Tall dodder).